Reading from the N-terminus, the 226-residue chain is Thioredoxin domain-containing protein 9 (226 aa).

One can recognise a Thioredoxin domain in the interval 52–180; sequence LEALKKAQQQ…TTETLEWRLG (129 aa). Phosphoserine occurs at positions 188, 221, and 223.

In terms of assembly, forms ternary complexes with the chaperonin TCP1 complex, spanning the cylindrical chaperonin cavity and contacting at least 2 subunits.

It is found in the cytoplasm. The protein localises to the nucleus. The protein resides in the cytoskeleton. It localises to the microtubule organizing center. Its subcellular location is the centrosome. It is found in the midbody. Functionally, significantly diminishes the chaperonin TCP1 complex ATPase activity, thus negatively impacts protein folding, including that of actin or tubulin. This chain is Thioredoxin domain-containing protein 9 (TXNDC9), found in Bos taurus (Bovine).